The following is a 303-amino-acid chain: Flavin-dependent thymidylate synthase (303 aa).

The region spanning 41-258 is the ThyX domain; that stretch reads GKVALVDTMP…PVACEAFIDY (218 aa). FAD is bound by residues Ser-95, 118–120, and Glu-126; that span reads RHR. Residues 115–118, 126–130, and Arg-197 each bind dUMP; these read QWIR and EYSAR. A ThyX motif motif is present at residues 118-128; that stretch reads RHRTANVNEYS. Residues 213-215 and His-219 contribute to the FAD site; that span reads DLH. Arg-224 lines the dUMP pocket. The active-site Involved in ionization of N3 of dUMP, leading to its activation is the Arg-224.

It belongs to the thymidylate synthase ThyX family. As to quaternary structure, homotetramer. FAD is required as a cofactor.

It catalyses the reaction dUMP + (6R)-5,10-methylene-5,6,7,8-tetrahydrofolate + NADPH + H(+) = dTMP + (6S)-5,6,7,8-tetrahydrofolate + NADP(+). The protein operates within pyrimidine metabolism; dTTP biosynthesis. Catalyzes the reductive methylation of 2'-deoxyuridine-5'-monophosphate (dUMP) to 2'-deoxythymidine-5'-monophosphate (dTMP) while utilizing 5,10-methylenetetrahydrofolate (mTHF) as the methyl donor, and NADPH and FADH(2) as the reductant. The sequence is that of Flavin-dependent thymidylate synthase (thyA) from Dictyostelium discoideum (Social amoeba).